Consider the following 210-residue polypeptide: Small ribosomal subunit protein uS7 (210 aa).

This sequence belongs to the universal ribosomal protein uS7 family. In terms of assembly, component of the small ribosomal subunit. Part of the small subunit (SSU) processome, composed of more than 70 proteins and the RNA chaperone small nucleolar RNA (snoRNA) U3.

The protein localises to the cytoplasm. It localises to the nucleus. It is found in the nucleolus. In terms of biological role, component of the small ribosomal subunit. The ribosome is a large ribonucleoprotein complex responsible for the synthesis of proteins in the cell. Part of the small subunit (SSU) processome, first precursor of the small eukaryotic ribosomal subunit. During the assembly of the SSU processome in the nucleolus, many ribosome biogenesis factors, an RNA chaperone and ribosomal proteins associate with the nascent pre-rRNA and work in concert to generate RNA folding, modifications, rearrangements and cleavage as well as targeted degradation of pre-ribosomal RNA by the RNA exosome. This is Small ribosomal subunit protein uS7 (rps-5) from Caenorhabditis elegans.